We begin with the raw amino-acid sequence, 247 residues long: DNA repair protein RecO (247 aa).

It belongs to the RecO family.

Functionally, involved in DNA repair and RecF pathway recombination. The protein is DNA repair protein RecO of Methylocella silvestris (strain DSM 15510 / CIP 108128 / LMG 27833 / NCIMB 13906 / BL2).